The chain runs to 1049 residues: Probable ATP-dependent permease (1049 aa).

An N-terminal signal peptide occupies residues 1–25 (MGSHRRYLYYSILSFLLLSCSVVLA). Residues 26-324 (KQDKTPFFEG…KDPTVSWQGK (299 aa)) are Lumenal-facing. N-linked (GlcNAc...) asparagine glycosylation is found at N50, N114, N165, and N221. Residues 325-345 (LVLALTAVMVLALFTFATFYI) form a helical membrane-spanning segment. Residues 346–463 (SKSPLFRNGL…ISMDRKSFSK (118 aa)) lie on the Cytoplasmic side of the membrane. The region spanning 384 to 631 (LSFENITYSV…LRNEGYICPD (248 aa)) is the ABC transporter domain. 423–430 (GGSGAGKT) provides a ligand contact to ATP. The chain crosses the membrane as a helical span at residues 464–481 (IIGFVDQDDFLLPTLTVF). Over 482–793 (ETVLNSALLR…SFKNMYRNPK (312 aa)) the chain is Lumenal. A phosphoserine mark is found at S659 and S702. One can recognise an ABC transmembrane type-2 domain in the interval 793–1044 (KLLLGNYLLT…IMGYLALKWI (252 aa)). A helical transmembrane segment spans residues 794–814 (LLLGNYLLTILLSLFLGTLYY). The Cytoplasmic segment spans residues 815 to 828 (NVSNDISGFQNRMG). The chain crosses the membrane as a helical span at residues 829–849 (LFFFILTYFGFVTFTGLSSFA). Residues 850-877 (LERIIFIKERSNNYYSPLAYYISKIMSE) lie on the Lumenal side of the membrane. Residues 878-898 (VVPLRVVPPILLSLIVYPMTG) form a helical membrane-spanning segment. The Cytoplasmic segment spans residues 899 to 909 (LNMKDNAFFKC). A helical transmembrane segment spans residues 910–930 (IGILILFNLGISLEILTIGII). The Lumenal portion of the chain corresponds to 931-937 (FEDLNNS). An N-linked (GlcNAc...) asparagine glycan is attached at N935. The chain crosses the membrane as a helical span at residues 938–958 (IILSVLVLLGSLLFSGLFINT). Topologically, residues 959 to 1000 (KNITNVAFKYLKNFSVFYYAYESLLINEVKTLMLKERKYGLN) are cytoplasmic. A helical membrane pass occupies residues 1001–1021 (IEVPGATILSTFGFVVQNLVF). The Lumenal segment spans residues 1022 to 1024 (DIK). A helical membrane pass occupies residues 1025 to 1045 (ILALFNVVFLIMGYLALKWIV). At 1046-1049 (VEQK) the chain is on the cytoplasmic side.

Belongs to the ABC transporter superfamily. ABCG family. Eye pigment precursor importer (TC 3.A.1.204) subfamily.

The protein resides in the endoplasmic reticulum membrane. This is Probable ATP-dependent permease (ADP1) from Saccharomyces cerevisiae (strain ATCC 204508 / S288c) (Baker's yeast).